Here is a 333-residue protein sequence, read N- to C-terminus: MLTLTHICTVSYEVRSTFLFISVLEFAVGFLTNAFISLVNFWDVVKRQPLSNSDCVLLCLSISRLFLHGLLFLSAIQLTHFQKLSEPLNHSYQVILMLWMIANQANLWLAACLSLLYCSKLIRFSHTFLICLASWVSRKISQMLLGIILCSCICTVLCVWCFFGRLHFTVTTVLFMNNNTRLNWQIKDLNLFYSFLFCYLWSVPPFLLFLVSSGMLTVSLGRHMRTMKVYTRDSRDPSLEAHIKALKSLVSFFCFFVISSCAAFISVPLLILWHDKIGVMVCVGIMAACPSGHAAVLISGNAKLRRAVTTILLWAQSSLKVRADHMADSRTLC.

The Extracellular portion of the chain corresponds to Met1–Thr17. Residues Phe18–Leu38 form a helical membrane-spanning segment. The Cytoplasmic portion of the chain corresponds to Val39–Cys55. A helical transmembrane segment spans residues Val56–Ile76. Residues Gln77–Val94 lie on the Extracellular side of the membrane. Residues Ile95 to Leu115 form a helical membrane-spanning segment. The Cytoplasmic portion of the chain corresponds to Leu116 to Gln142. Residues Met143–Phe163 traverse the membrane as a helical segment. Residues Gly164–Asn190 lie on the Extracellular side of the membrane. Asn178 is a glycosylation site (N-linked (GlcNAc...) asparagine). Residues Leu191–Val211 traverse the membrane as a helical segment. Residues Ser212–Ser251 are Cytoplasmic-facing. A helical transmembrane segment spans residues Phe252–Leu272. Over Trp273 to Lys276 the chain is Extracellular. A helical membrane pass occupies residues Ile277–Leu297. Over Ile298–Cys333 the chain is Cytoplasmic.

The protein belongs to the G-protein coupled receptor T2R family.

It is found in the membrane. Its function is as follows. Receptor that may play a role in the perception of bitterness and is gustducin-linked. May play a role in sensing the chemical composition of the gastrointestinal content. The activity of this receptor may stimulate alpha gustducin, mediate PLC-beta-2 activation and lead to the gating of TRPM5. The sequence is that of Taste receptor type 2 member 38 (TAS2R38) from Papio hamadryas (Hamadryas baboon).